Consider the following 434-residue polypeptide: 3-phosphoshikimate 1-carboxyvinyltransferase (434 aa).

3-phosphoshikimate contacts are provided by K22, S23, and R27. K22 is a phosphoenolpyruvate binding site. Residues G94 and R122 each coordinate phosphoenolpyruvate. 6 residues coordinate 3-phosphoshikimate: S169, S170, Q171, S199, D320, and K347. Q171 provides a ligand contact to phosphoenolpyruvate. The Proton acceptor role is filled by D320. 3 residues coordinate phosphoenolpyruvate: R351, R395, and K420.

This sequence belongs to the EPSP synthase family. Monomer.

Its subcellular location is the cytoplasm. It catalyses the reaction 3-phosphoshikimate + phosphoenolpyruvate = 5-O-(1-carboxyvinyl)-3-phosphoshikimate + phosphate. The protein operates within metabolic intermediate biosynthesis; chorismate biosynthesis; chorismate from D-erythrose 4-phosphate and phosphoenolpyruvate: step 6/7. Functionally, catalyzes the transfer of the enolpyruvyl moiety of phosphoenolpyruvate (PEP) to the 5-hydroxyl of shikimate-3-phosphate (S3P) to produce enolpyruvyl shikimate-3-phosphate and inorganic phosphate. This chain is 3-phosphoshikimate 1-carboxyvinyltransferase, found in Ralstonia pickettii (strain 12J).